We begin with the raw amino-acid sequence, 690 residues long: Protein hook (690 aa).

The Calponin-homology (CH) domain occupies 6 to 122 (MEIYESLIRW…RLLQLILGCA (117 aa)). Coiled-coil stretches lie at residues 134–515 (QIME…HHAE) and 546–577 (ETTQ…QAAD).

Belongs to the hook family. As to quaternary structure, homodimer. Interacts with microtubules via its N-terminus.

The protein localises to the cytoplasm. Its subcellular location is the cytoskeleton. The protein resides in the endosome. In terms of biological role, involved in endocytic trafficking. Probably acts as a cytoskeletal linker protein that tethers endosome vesicles to the cytoskeleton. The sequence is that of Protein hook from Anopheles gambiae (African malaria mosquito).